The following is a 179-amino-acid chain: Pectinesterase inhibitor 5 (179 aa).

A signal peptide spans 1 to 25 (MATMLINHMLFLTSLLIVVFPVANA). 2 cysteine pairs are disulfide-bonded: Cys35-Cys44 and Cys101-Cys141.

This sequence belongs to the PMEI family. In terms of tissue distribution, expressed in seeds, buds, and mature flowers.

It localises to the secreted. The protein resides in the extracellular space. The protein localises to the apoplast. Pectin methylesterase (PME) inhibitor that targets PME from seeds and modulates PME activity and pectin methylesterification during seed germination. The polypeptide is Pectinesterase inhibitor 5 (Arabidopsis thaliana (Mouse-ear cress)).